A 447-amino-acid chain; its full sequence is Serine/threonine-protein kinase NLK2 (447 aa).

One can recognise a Protein kinase domain in the interval 60 to 349 (PEPDRPIGYG…AKDALAHPYL (290 aa)). Residues 66-74 (IGYGAFGVV) and Lys-89 contribute to the ATP site. The active-site Proton acceptor is Asp-186.

Belongs to the protein kinase superfamily. CMGC Ser/Thr protein kinase family. MAP kinase subfamily. In terms of assembly, interacts with sox11, hmgxb4/hmg2l1, rnf138/narf, stat3.1 and mef2a. Mg(2+) is required as a cofactor. As to expression, expressed widely in the ectoderm during early gastrula stage when neural induction is taking place. Expressed in the head region of neurula stage embryos. At the end of neurulation, expression becomes localized to the nervous system, and is restricted to the central nervous system, eye and head neural crest cells by the early tadpole stages.

It localises to the nucleus. It is found in the cytoplasm. It catalyses the reaction L-seryl-[protein] + ATP = O-phospho-L-seryl-[protein] + ADP + H(+). The enzyme catalyses L-threonyl-[protein] + ATP = O-phospho-L-threonyl-[protein] + ADP + H(+). With respect to regulation, activated by tyrosine and threonine phosphorylation. Negatively regulates Wnt/beta-catenin-signaling during development. Plays a role together with sox11 in neural induction during early embryogenesis. Involved in TGFbeta-mediated mesoderm induction in early embryos, acting downstream of map3k7/tak1 to phosphorylate stat3.1. Augments the rnf138/narf-directed ubiquitination and degradation of tcf/lef by enhancing the association of rnf138/narf and tcf/lef. Phosphorylates mef2a to play a role in anterior neural development, including eye formation. This is Serine/threonine-protein kinase NLK2 (nlk.2) from Xenopus laevis (African clawed frog).